Here is a 224-residue protein sequence, read N- to C-terminus: Heme response regulator HssR (224 aa).

The region spanning 3-116 is the Response regulatory domain; it reads NCLIVDDDKK…ELLFRIKAVL (114 aa). Asp52 is subject to 4-aspartylphosphate. Positions 124 to 222 form a DNA-binding region, ompR/PhoB-type; the sequence is DNELQLGNLI…VRGQGYRVDQ (99 aa).

Post-translationally, phosphorylated by HssS.

It is found in the cytoplasm. Its function is as follows. Member of the two-component regulatory system HssS/HssR involved in intracellular heme homeostasis and tempering of staphylococcal virulence. Phosphorylated HssR binds to a direct repeat sequence within hrtAB promoter and activates the expression of hrtAB, an efflux pump, in response to extracellular heme, hemin, hemoglobin or blood. The chain is Heme response regulator HssR (hssR) from Staphylococcus epidermidis (strain ATCC 12228 / FDA PCI 1200).